Reading from the N-terminus, the 156-residue chain is Snaclec A11 (156 aa).

The N-terminal stretch at 1 to 23 is a signal peptide; sequence MGRSISVSFGLLVVFLSLSGTGA. Disulfide bonds link C27-C38, C55-C154, and C129-C146. The 122-residue stretch at 34–155 folds into the C-type lectin domain; the sequence is YDQHCYQAVD…CGQPYRFTCE (122 aa).

It belongs to the snaclec family. As to quaternary structure, heterodimer; disulfide-linked. Expressed by the venom gland.

It is found in the secreted. Interferes with one step of hemostasis (modulation of platelet aggregation, or coagulation cascade, for example). This chain is Snaclec A11, found in Macrovipera lebetinus (Levantine viper).